An 810-amino-acid polypeptide reads, in one-letter code: Plasminogen (810 aa).

The N-terminal stretch at 1-19 (MEHKEVVLLLLLFLKSGQG) is a signal peptide. Residues 20-98 (EPLDDYVNTQ…RDVVLFEKKV (79 aa)) enclose the PAN domain. Intrachain disulfides connect C49–C73, C53–C61, C103–C181, C124–C164, C152–C176, C185–C262, C188–C316, C206–C245, C234–C257, C275–C352, C296–C335, and C324–C347. Kringle domains lie at 103 to 181 (CKTG…IPEC), 184 to 262 (ACMH…IPRC), and 275 to 352 (CLKG…IPSC). A disordered region spans residues 126-145 (KWSSTSPHRPRFSPATHPSE). The L-lysine site is built by R136, D158, and R172. T365 is a glycosylation site (O-linked (GalNAc...) threonine). Disulfide bonds link C377/C454, C398/C437, C426/C449, C481/C560, C502/C543, C531/C555, C567/C685, C577/C585, and C607/C623. Kringle domains follow at residues 377–454 (CYHG…LKKC) and 481–560 (CMFG…VPQC). L-lysine contacts are provided by D432 and R445. A Peptidase S1 domain is found at 581 to 808 (VVGGCVANAH…FVTWIEGVMR (228 aa)). At S597 the chain carries Phosphoserine. Residues H622 and D665 each act as charge relay system in the active site. S688 carries the post-translational modification Phosphoserine. Disulfide bonds link C699–C766, C729–C745, and C756–C784. The active-site Charge relay system is the S760.

It belongs to the peptidase S1 family. Plasminogen subfamily. As to quaternary structure, interacts with CSPG4 and AMOT. Interacts (via the Kringle domains) with HRG; the interaction tethers PLG to the cell surface and enhances its activation. Interacts (via Kringle 4 domain) with ADA; the interaction stimulates PLG activation when in complex with DPP4. Angiostatin: Interacts with ATP5F1A; the interaction inhibits most of the angiogenic effects of angiostatin. In terms of processing, in the presence of the inhibitor, the activation involves only cleavage after Arg-580, yielding two chains held together by two disulfide bonds. In the absence of the inhibitor, the activation involves additionally the removal of the activation peptide.

The protein localises to the secreted. It catalyses the reaction Preferential cleavage: Lys-|-Xaa &gt; Arg-|-Xaa, higher selectivity than trypsin. Converts fibrin into soluble products.. Its activity is regulated as follows. Converted into plasmin by plasminogen activators, both plasminogen and its activator being bound to fibrin. Activated with catalytic amounts of streptokinase. In terms of biological role, plasmin dissolves the fibrin of blood clots and acts as a proteolytic factor in a variety of other processes including embryonic development, tissue remodeling, tumor invasion, and inflammation. In ovulation, weakens the walls of the Graafian follicle. It activates the urokinase-type plasminogen activator, collagenases and several complement zymogens, such as C1, C4 and C5. Cleavage of fibronectin and laminin leads to cell detachment and apoptosis. Also cleaves fibrin, thrombospondin and von Willebrand factor. Its role in tissue remodeling and tumor invasion may be modulated by CSPG4. Binds to cells. This chain is Plasminogen (PLG), found in Pongo abelii (Sumatran orangutan).